We begin with the raw amino-acid sequence, 579 residues long: Eukaryotic translation initiation factor 3 subunit D (579 aa).

Disordered stretches follow at residues methionine 1–serine 20, asparagine 51–aspartate 72, and arginine 109–lysine 170. Residues asparagine 51 to glycine 64 are compositionally biased toward low complexity. Gly residues predominate over residues glycine 120 to phenylalanine 167. The interval alanine 307–proline 321 is RNA gate.

The protein belongs to the eIF-3 subunit D family. As to quaternary structure, component of the eukaryotic translation initiation factor 3 (eIF-3) complex.

It is found in the cytoplasm. MRNA cap-binding component of the eukaryotic translation initiation factor 3 (eIF-3) complex, which is involved in protein synthesis of a specialized repertoire of mRNAs and, together with other initiation factors, stimulates binding of mRNA and methionyl-tRNAi to the 40S ribosome. The eIF-3 complex specifically targets and initiates translation of a subset of mRNAs involved in cell proliferation. In the eIF-3 complex, eif3d specifically recognizes and binds the 7-methylguanosine cap of a subset of mRNAs. The polypeptide is Eukaryotic translation initiation factor 3 subunit D (Mycosarcoma maydis (Corn smut fungus)).